We begin with the raw amino-acid sequence, 483 residues long: MSTLMVQGTTSDAGKSTLVTALCRWLIRQGVAVAPFKPQNMALNSAVTAEGGEIGRAQAVQAQAANLAPHTDMNPVLLKPNSDTGSQVIIHGRAVTSMNAVAYHDYKAIAMQAVLASHARLSEAYPVVMVEGAGSPAEINLRANDIANMGFAEAVDCPVLLIADINRGGVFAHLVGTLELLSPTEQARVKGFIINRFRGDIALLQPGLDWLEARTGKPVVGVLPYVMDLHLEAEDGIDRRQIDKAAQVLKVVVPVLPRISNHTDFDPLRLHPQVDLQFVGPGQPIPAADLIILPGSKSVRSDLAYLRANGWETAVARHLRYGGKVLGICGGLQMLGEQVHDPLGLEGPAGSSDGLGLLAFSTTLEEEKQLRNVRGRLLLEDAQVSGYEIHAGVTTGDGLSNAAVLLDDGRSDGAQSADGQILGTYLHGLFETAAACSALLRWAGLEDVQAVDYHALRERDIERLADLVENHLDTELLRELCGI.

Residues 248–435 (VLKVVVPVLP…LHGLFETAAA (188 aa)) form the GATase cobBQ-type domain. Cysteine 329 acts as the Nucleophile in catalysis. Histidine 427 is a catalytic residue.

It belongs to the CobB/CobQ family. CobQ subfamily.

The protein operates within cofactor biosynthesis; adenosylcobalamin biosynthesis. Its function is as follows. Catalyzes amidations at positions B, D, E, and G on adenosylcobyrinic A,C-diamide. NH(2) groups are provided by glutamine, and one molecule of ATP is hydrogenolyzed for each amidation. This is Cobyric acid synthase from Pseudomonas fluorescens (strain SBW25).